The sequence spans 99 residues: DNA-directed RNA polymerase subunit Rpo11 (99 aa).

This sequence belongs to the archaeal Rpo11/eukaryotic RPB11/RPC19 RNA polymerase subunit family. In terms of assembly, part of the RNA polymerase complex.

It is found in the cytoplasm. The catalysed reaction is RNA(n) + a ribonucleoside 5'-triphosphate = RNA(n+1) + diphosphate. Its function is as follows. DNA-dependent RNA polymerase (RNAP) catalyzes the transcription of DNA into RNA using the four ribonucleoside triphosphates as substrates. This is DNA-directed RNA polymerase subunit Rpo11 from Aeropyrum pernix (strain ATCC 700893 / DSM 11879 / JCM 9820 / NBRC 100138 / K1).